A 246-amino-acid polypeptide reads, in one-letter code: Orotidine 5'-phosphate decarboxylase (246 aa).

Residues aspartate 22, lysine 44, 71-80, threonine 130, arginine 191, glutamine 201, glycine 221, and arginine 222 contribute to the substrate site; that span reads DLKYHDIPHT. Catalysis depends on lysine 73, which acts as the Proton donor.

Belongs to the OMP decarboxylase family. Type 1 subfamily. In terms of assembly, homodimer.

It catalyses the reaction orotidine 5'-phosphate + H(+) = UMP + CO2. It participates in pyrimidine metabolism; UMP biosynthesis via de novo pathway; UMP from orotate: step 2/2. Catalyzes the decarboxylation of orotidine 5'-monophosphate (OMP) to uridine 5'-monophosphate (UMP). This Neisseria gonorrhoeae (strain ATCC 700825 / FA 1090) protein is Orotidine 5'-phosphate decarboxylase.